The sequence spans 436 residues: UPF0597 protein YhaM (436 aa).

Belongs to the UPF0597 family.

The protein is UPF0597 protein YhaM of Salmonella paratyphi A (strain ATCC 9150 / SARB42).